Here is a 340-residue protein sequence, read N- to C-terminus: MAITVYYDKDCDLNLIKSKKVAIIGFGSQGHAHAMNLRDNGVNVTIGLREGSVSAVKAKNAGFEVMSVSEASKIADVIMILAPDEIQADIFNVEIKPNLSEGKAIAFAHGFNIHYGQIVVPKGVDVIMIAPKAPGHTVRNEFTLGGGTPCLIAIHQDESKNAKNLALSYASAIGGGRTGIIETTFKAETETDLFGEQAVLCGGLSALIQAGFETLVEAGYEPEMAYFECLHEMKLIVDLIYQGGIADMRYSISNTAEYGDYITGPKIITEETKKAMKGVLKDIQNGVFAKDFILERRAGFARMHAERKNMNDSLIEKTGRNLRAMMPWISAKKLVDKDKN.

The KARI N-terminal Rossmann domain occupies 1–183; sequence MAITVYYDKD…GGGRTGIIET (183 aa). NADP(+) is bound by residues 26–29, Arg-49, Ser-52, Ser-54, and 84–87; these read FGSQ and DEIQ. His-109 is an active-site residue. Gly-135 is a binding site for NADP(+). Positions 184-329 constitute a KARI C-terminal knotted domain; that stretch reads TFKAETETDL…RNLRAMMPWI (146 aa). Asp-192, Glu-196, Glu-228, and Glu-232 together coordinate Mg(2+). A substrate-binding site is contributed by Ser-253.

Belongs to the ketol-acid reductoisomerase family. Mg(2+) serves as cofactor.

It catalyses the reaction (2R)-2,3-dihydroxy-3-methylbutanoate + NADP(+) = (2S)-2-acetolactate + NADPH + H(+). The catalysed reaction is (2R,3R)-2,3-dihydroxy-3-methylpentanoate + NADP(+) = (S)-2-ethyl-2-hydroxy-3-oxobutanoate + NADPH + H(+). Its pathway is amino-acid biosynthesis; L-isoleucine biosynthesis; L-isoleucine from 2-oxobutanoate: step 2/4. The protein operates within amino-acid biosynthesis; L-valine biosynthesis; L-valine from pyruvate: step 2/4. Functionally, involved in the biosynthesis of branched-chain amino acids (BCAA). Catalyzes an alkyl-migration followed by a ketol-acid reduction of (S)-2-acetolactate (S2AL) to yield (R)-2,3-dihydroxy-isovalerate. In the isomerase reaction, S2AL is rearranged via a Mg-dependent methyl migration to produce 3-hydroxy-3-methyl-2-ketobutyrate (HMKB). In the reductase reaction, this 2-ketoacid undergoes a metal-dependent reduction by NADPH to yield (R)-2,3-dihydroxy-isovalerate. This Campylobacter jejuni (strain RM1221) protein is Ketol-acid reductoisomerase (NADP(+)).